The chain runs to 145 residues: Catabolic 3-dehydroquinase (145 aa).

Tyr-24 (proton acceptor) is an active-site residue. Residues Asn-77, His-83, and Asp-90 each coordinate substrate. Residue His-103 is the Proton donor of the active site. Substrate-binding positions include 104 to 105 (IT) and Arg-114.

The protein belongs to the type-II 3-dehydroquinase family. As to quaternary structure, homododecamer. Adopts a ring-like structure, composed of an arrangement of two hexameric rings stacked on top of one another.

The catalysed reaction is 3-dehydroquinate = 3-dehydroshikimate + H2O. It participates in aromatic compound metabolism; 3,4-dihydroxybenzoate biosynthesis; 3,4-dihydroxybenzoate from 3-dehydroquinate: step 1/2. Functionally, is involved in the catabolism of quinate. Allows the utilization of quinate as carbon source via the beta-ketoadipate pathway. This is Catabolic 3-dehydroquinase from Clavispora lusitaniae (strain ATCC 42720) (Yeast).